Here is a 380-residue protein sequence, read N- to C-terminus: Alcohol dehydrogenase (380 aa).

Residues Cys48, Thr50, His70, Cys100, Cys103, Cys106, Cys114, and Cys178 each contribute to the Zn(2+) site. Residues Thr50 and His70 each contribute to the an alcohol site. Thr50 contacts NAD(+). NAD(+) contacts are provided by residues Gly203–Gly208, Asp227, Arg232, Thr273, Val296, Val296–Val298, Phe323, and Arg373.

Belongs to the zinc-containing alcohol dehydrogenase family. In terms of assembly, homodimer. Requires Zn(2+) as cofactor.

The protein resides in the cytoplasm. It catalyses the reaction a primary alcohol + NAD(+) = an aldehyde + NADH + H(+). It carries out the reaction a secondary alcohol + NAD(+) = a ketone + NADH + H(+). The chain is Alcohol dehydrogenase (ADH) from Malus domestica (Apple).